Here is a 388-residue protein sequence, read N- to C-terminus: Succinate--CoA ligase [ADP-forming] subunit beta (388 aa).

The 236-residue stretch at Lys-9–His-244 folds into the ATP-grasp domain. Residues Lys-46, Gly-53 to Gly-55, Glu-99, Thr-102, and Glu-107 contribute to the ATP site. Positions 199 and 213 each coordinate Mg(2+). Residues Asn-264 and Gly-321–Val-323 each bind substrate.

The protein belongs to the succinate/malate CoA ligase beta subunit family. Heterotetramer of two alpha and two beta subunits. Mg(2+) serves as cofactor.

The catalysed reaction is succinate + ATP + CoA = succinyl-CoA + ADP + phosphate. It catalyses the reaction GTP + succinate + CoA = succinyl-CoA + GDP + phosphate. It functions in the pathway carbohydrate metabolism; tricarboxylic acid cycle; succinate from succinyl-CoA (ligase route): step 1/1. Succinyl-CoA synthetase functions in the citric acid cycle (TCA), coupling the hydrolysis of succinyl-CoA to the synthesis of either ATP or GTP and thus represents the only step of substrate-level phosphorylation in the TCA. The beta subunit provides nucleotide specificity of the enzyme and binds the substrate succinate, while the binding sites for coenzyme A and phosphate are found in the alpha subunit. In Colwellia psychrerythraea (strain 34H / ATCC BAA-681) (Vibrio psychroerythus), this protein is Succinate--CoA ligase [ADP-forming] subunit beta.